Here is a 482-residue protein sequence, read N- to C-terminus: DnaJ protein P58IPK homolog (482 aa).

The N-terminal stretch at 1–42 (MDLFRVWSGMDFLAWRGMAYTLLLLNFVFACQLLLLQPLVSA) is a signal peptide. TPR repeat units lie at residues 50 to 83 (AAELFERASQSIKVKRYSDALDDLNAAIEADPAL), 85 to 117 (EAYFKRASVLRHFCRYEDSENSYQKYLEFKSGD), 130 to 164 (AKSALETASTLYESKDIAKALEFVDKVVLVFSPAC), 166 to 198 (KAKLLKVKLLMVSKDYSGAISETGYILKEDENN), 199 to 232 (LEALLLRGRAYYYLADHDIAQRHYQKGLRLDPEH), 245 to 278 (LLKKTKSAEDNANKGKLRVSAEEYKEAIALDPEH), 283 to 316 (VHLYLGLCKVSVRLGRGKDGLNSCNEALNIDAEL), and 318 to 350 (EALHQRGEAKLLLEDWEGAVEDLKQAAQNSQDM). One can recognise a J domain in the interval 370-436 (DWYKILGISR…DKRARFDRGE (67 aa)).

As to quaternary structure, interacts with the helicase domain of the tobamovirus (TMV) and the tobacco etch virus (TEV) replicases. Expressed in flower buds and flowers.

The protein localises to the endoplasmic reticulum lumen. Plays an important positive role in viral symptom development and is required for viral multiplication and pathogenesis. The sequence is that of DnaJ protein P58IPK homolog (P58IPK) from Arabidopsis thaliana (Mouse-ear cress).